The sequence spans 158 residues: ATP synthase subunit beta, mitochondrial (158 aa).

Belongs to the ATPase alpha/beta chains family. F-type ATPases have 2 components, CF(1) - the catalytic core - and CF(0) - the membrane proton channel. CF(1) has five subunits: alpha(3), beta(3), gamma(1), delta(1), epsilon(1). CF(0) has three main subunits: a, b and c.

Its subcellular location is the mitochondrion. It localises to the mitochondrion inner membrane. The catalysed reaction is ATP + H2O + 4 H(+)(in) = ADP + phosphate + 5 H(+)(out). Its function is as follows. Mitochondrial membrane ATP synthase (F(1)F(0) ATP synthase or Complex V) produces ATP from ADP in the presence of a proton gradient across the membrane which is generated by electron transport complexes of the respiratory chain. F-type ATPases consist of two structural domains, F(1) - containing the extramembraneous catalytic core, and F(0) - containing the membrane proton channel, linked together by a central stalk and a peripheral stalk. During catalysis, ATP synthesis in the catalytic domain of F(1) is coupled via a rotary mechanism of the central stalk subunits to proton translocation. Subunits alpha and beta form the catalytic core in F(1). Rotation of the central stalk against the surrounding alpha(3)beta(3) subunits leads to hydrolysis of ATP in three separate catalytic sites on the beta subunits. The protein is ATP synthase subunit beta, mitochondrial of Schizaphis graminum (Green bug aphid).